The following is a 37-amino-acid chain: Alpha-conotoxin LvIA (37 aa).

Residues 1-20 (FRGRDAAAKASGLVGLTDRR) constitute a propeptide that is removed on maturation. 2 disulfide bridges follow: Cys22-Cys28 and Cys23-Cys36. The interval 24 to 26 (SHP) is ser-Xaa-Pro motif, crucial for potent interaction with nAChR. Cys36 is modified (cysteine amide).

This sequence belongs to the conotoxin A superfamily. In terms of tissue distribution, expressed by the venom duct.

It localises to the secreted. Its function is as follows. Alpha-conotoxins act on postsynaptic membranes, they bind to the nicotinic acetylcholine receptors (nAChR) and thus inhibit them. This toxin blocks alpha-3-beta-2/CHRNA3-CHRNB2 nAChR with high selectivity (IC(50)=8.67 nM (on rat) and 17.5 (on human)). Also has weaker activity on alpha-6/alpha-3-beta-2-beta-3 (CHRNA6/CHRNA3-CHRNB2-CHRNB3) (IC(50)=108 nM (on rat)), alpha-6/alpha-3-beta-4 (CHRNA6/CHRNA3-CHRNB4) (IC(50)=121 nM (on rat)), alpha-3-beta-4 (CHRNA3-CHRNB4) (IC(50)=148 nM (on rat)), and alpha-7/CHRNA7 nAChRs (IC(50)=3000 nM (on rat)). When tested on mouse with hot-plate tests, this toxin significantly increases the base pain threshold and shows analgesic effects. The polypeptide is Alpha-conotoxin LvIA (Conus lividus (Livid cone)).